The primary structure comprises 387 residues: Patatin group A-2 (387 aa).

The N-terminal stretch at 1 to 23 (MATTKSFLILIVMILATTSSTFA) is a signal peptide. A PNPLA domain is found at 32 to 230 (LSIDGGGIKG…TVADPALLSV (199 aa)). Positions 36-41 (GGGIKG) match the GXGXXG motif. The GXSXG signature appears at 75-79 (GTSTG). Residue S77 is the Nucleophile of the active site. A glycan (N-linked (GlcNAc...) asparagine) is linked at N115. Catalysis depends on D216, which acts as the Proton acceptor. A DGA/G motif is present at residues 216 to 218 (DGA). A coiled-coil region spans residues 361–385 (ETYEEALKRFAKLLSDRKKLRANKA).

The protein belongs to the patatin family. As to expression, tuber and stolon.

The protein resides in the vacuole. Probable lipolytic acyl hydrolase (LAH), an activity which is thought to be involved in the response of tubers to pathogens. The polypeptide is Patatin group A-2 (Solanum tuberosum (Potato)).